Consider the following 233-residue polypeptide: Large ribosomal subunit protein uL3 (233 aa).

Positions 146–171 (GSQRASHGNSRSHRVPGSIGQAQDPG) are disordered. Gln168 is modified (N5-methylglutamine).

The protein belongs to the universal ribosomal protein uL3 family. In terms of assembly, part of the 50S ribosomal subunit. Forms a cluster with proteins L14 and L19. Post-translationally, methylated by PrmB.

Functionally, one of the primary rRNA binding proteins, it binds directly near the 3'-end of the 23S rRNA, where it nucleates assembly of the 50S subunit. The protein is Large ribosomal subunit protein uL3 of Bordetella bronchiseptica (strain ATCC BAA-588 / NCTC 13252 / RB50) (Alcaligenes bronchisepticus).